The primary structure comprises 249 residues: Eukaryotic translation initiation factor 3 subunit J-A (249 aa).

The span at 1 to 15 (MADADSWDADSFEPE) shows a compositional bias: acidic residues. The disordered stretch occupies residues 1 to 104 (MADADSWDAD…DTPLTPEDEL (104 aa)). Positions 16-27 (EPIKKAAVHDKW) are enriched in basic and acidic residues. Over residues 28–52 (EGEDEDDDVKDNWDDDEEEEKEEEE) the composition is skewed to acidic residues. Positions 34–96 (DDVKDNWDDD…QQLEETKRDT (63 aa)) form a coiled coil. Basic and acidic residues predominate over residues 53-96 (EKKTEAKPTEKKKLSEKIKEKENLQRKKQEELRKQQLEETKRDT).

It belongs to the eIF-3 subunit J family. As to quaternary structure, component of the eukaryotic translation initiation factor 3 (eIF-3) complex, which is composed of 13 subunits: eif3a, eif3b, eif3c, eif3d, eif3e, eif3f, eif3g, eif3h, eif3i, eif3j, eif3k, eif3l and eif3m.

It localises to the cytoplasm. Component of the eukaryotic translation initiation factor 3 (eIF-3) complex, which is involved in protein synthesis of a specialized repertoire of mRNAs and, together with other initiation factors, stimulates binding of mRNA and methionyl-tRNAi to the 40S ribosome. The eIF-3 complex specifically targets and initiates translation of a subset of mRNAs involved in cell proliferation. The chain is Eukaryotic translation initiation factor 3 subunit J-A (eif3ja) from Danio rerio (Zebrafish).